The sequence spans 413 residues: Glycosyl hydrolase family 109 protein 2 (413 aa).

Residues 26 to 27 (NR), Asp48, 96 to 99 (WLTH), 116 to 117 (EV), and Asn145 contribute to the NAD(+) site. Tyr174 contributes to the substrate binding site. Residues 191-195 (YHNHW) and Tyr208 each bind NAD(+). Substrate is bound by residues 208-211 (YPTH) and Tyr290.

It belongs to the Gfo/Idh/MocA family. Glycosyl hydrolase 109 subfamily. NAD(+) serves as cofactor.

In terms of biological role, glycosidase. The polypeptide is Glycosyl hydrolase family 109 protein 2 (Phocaeicola vulgatus (strain ATCC 8482 / DSM 1447 / JCM 5826 / CCUG 4940 / NBRC 14291 / NCTC 11154) (Bacteroides vulgatus)).